Here is a 227-residue protein sequence, read N- to C-terminus: Cytochrome c oxidase subunit 2 (227 aa).

Residues 1–14 lie on the Mitochondrial intermembrane side of the membrane; that stretch reads MAHPVQLGLQDATS. The helical transmembrane segment at 15-45 threads the bilayer; it reads PVMEELITFHDYALMTISLISFLVLYALFST. Over 46-59 the chain is Mitochondrial matrix; sequence LTTKLTNTNITDAQ. The chain crosses the membrane as a helical span at residues 60–87; that stretch reads EMETTWTILPAVILILIALPSLRILYLT. At 88–227 the chain is on the mitochondrial intermembrane side; the sequence is DEINNPSFTI…IFEMGPVFTL (140 aa). Positions 161, 196, 198, 200, 204, and 207 each coordinate Cu cation. E198 contributes to the Mg(2+) binding site.

It belongs to the cytochrome c oxidase subunit 2 family. As to quaternary structure, component of the cytochrome c oxidase (complex IV, CIV), a multisubunit enzyme composed of 14 subunits. The complex is composed of a catalytic core of 3 subunits MT-CO1, MT-CO2 and MT-CO3, encoded in the mitochondrial DNA, and 11 supernumerary subunits COX4I, COX5A, COX5B, COX6A, COX6B, COX6C, COX7A, COX7B, COX7C, COX8 and NDUFA4, which are encoded in the nuclear genome. The complex exists as a monomer or a dimer and forms supercomplexes (SCs) in the inner mitochondrial membrane with NADH-ubiquinone oxidoreductase (complex I, CI) and ubiquinol-cytochrome c oxidoreductase (cytochrome b-c1 complex, complex III, CIII), resulting in different assemblies (supercomplex SCI(1)III(2)IV(1) and megacomplex MCI(2)III(2)IV(2)). Found in a complex with TMEM177, COA6, COX18, COX20, SCO1 and SCO2. Interacts with TMEM177 in a COX20-dependent manner. Interacts with COX20. Interacts with COX16. Cu cation is required as a cofactor.

It is found in the mitochondrion inner membrane. It carries out the reaction 4 Fe(II)-[cytochrome c] + O2 + 8 H(+)(in) = 4 Fe(III)-[cytochrome c] + 2 H2O + 4 H(+)(out). Functionally, component of the cytochrome c oxidase, the last enzyme in the mitochondrial electron transport chain which drives oxidative phosphorylation. The respiratory chain contains 3 multisubunit complexes succinate dehydrogenase (complex II, CII), ubiquinol-cytochrome c oxidoreductase (cytochrome b-c1 complex, complex III, CIII) and cytochrome c oxidase (complex IV, CIV), that cooperate to transfer electrons derived from NADH and succinate to molecular oxygen, creating an electrochemical gradient over the inner membrane that drives transmembrane transport and the ATP synthase. Cytochrome c oxidase is the component of the respiratory chain that catalyzes the reduction of oxygen to water. Electrons originating from reduced cytochrome c in the intermembrane space (IMS) are transferred via the dinuclear copper A center (CU(A)) of subunit 2 and heme A of subunit 1 to the active site in subunit 1, a binuclear center (BNC) formed by heme A3 and copper B (CU(B)). The BNC reduces molecular oxygen to 2 water molecules using 4 electrons from cytochrome c in the IMS and 4 protons from the mitochondrial matrix. This is Cytochrome c oxidase subunit 2 (MT-CO2) from Chlorocebus aethiops (Green monkey).